The sequence spans 521 residues: Lymphocyte activation gene 3 protein (521 aa).

The first 23 residues, 1–23 (MREDLLLGFLLLGLLWEAPVVSS), serve as a signal peptide directing secretion. At 24-442 (GPGKELPVVW…ISGDLKGGHL (419 aa)) the chain is on the extracellular side. The 127-residue stretch at 37–163 (GAPVHLPCSL…LSCSLRLRVG (127 aa)) folds into the Ig-like V-type domain. The tract at residues 37-246 (GAPVHLPCSL…LTYRDGFNVS (210 aa)) is interaction with FGL1. C44 and C156 form a disulfide bridge. Ig-like C2-type domains lie at 165–246 (ASMI…FNVS), 258–341 (PVAP…ATVT), and 345–412 (ITVT…EGQR). An N-linked (GlcNAc...) asparagine glycan is attached at N184. A disulfide bridge connects residues C185 and C235. N-linked (GlcNAc...) asparagine glycosylation is found at N244, N309, N337, and N381. Residues C276 and C327 are joined by a disulfide bond. C363 and C405 form a disulfide bridge. Residues 422 to 442 (ESSSGAHSARRISGDLKGGHL) form a connecting peptide region. The chain crosses the membrane as a helical span at residues 443-463 (VLVLILGALSLFLLVAGAFGF). Over 464 to 521 (HWWRKQLLLRRFSALEHGIQPFPAQRKIEELERELETEMGQEPEPEPEPQLEPEPRQL) the chain is Cytoplasmic. Positions 490-495 (KIEELE) match the KIEELE motif motif. Residues 493–518 (ELERELETEMGQEPEPEPEPQLEPEP) are 13 X 2 AA tandem repeats of E-X. A disordered region spans residues 493–521 (ELERELETEMGQEPEPEPEPQLEPEPRQL). Positions 500-514 (TEMGQEPEPEPEPQL) are enriched in acidic residues.

Belongs to the LAG3 family. As to quaternary structure, interacts with MHC class II (MHC-II); selectively recognizes stable complexes of peptide and MHC-II. Interacts with FGL1 (via the Fibrinogen C-terminal domain). Proteolytically cleaved by ADAM10 and ADAM17 within the connecting peptide region, leading to release of Secreted lymphocyte activation gene 3 protein (sLAG-3). ADAM10 mediates constitutive cleavage, but cleavage increases following T-cell activation, whereas shedding by ADAM17 is induced by TCR signaling in a PRKCQ-dependent manner. In terms of tissue distribution, primarily expressed in activated CD4(+) and CD8(+) T-cells. Also expressed in a subset of regulatory T-cells (Tregs), such as natural CD4(+)CD25(+) Tregs. Also expressed on plasmacytoid dendritic cells (pDCs).

The protein localises to the cell membrane. It localises to the secreted. In terms of biological role, lymphocyte activation gene 3 protein: Inhibitory receptor on antigen activated T-cells. Delivers inhibitory signals upon binding to ligands, such as FGL1. FGL1 constitutes a major ligand of LAG3 and is responsible for LAG3 T-cell inhibitory function. Following TCR engagement, LAG3 associates with CD3-TCR in the immunological synapse and directly inhibits T-cell activation. May inhibit antigen-specific T-cell activation in synergy with PDCD1/PD-1, possibly by acting as a coreceptor for PDCD1/PD-1. Negatively regulates the proliferation, activation, effector function and homeostasis of both CD8(+) and CD4(+) T-cells. Also mediates immune tolerance: constitutively expressed on a subset of regulatory T-cells (Tregs) and contributes to their suppressive function. Also acts as a negative regulator of plasmacytoid dendritic cell (pDCs) activation. Binds MHC class II (MHC-II); the precise role of MHC-II-binding is however unclear. Functionally, may function as a ligand for MHC class II (MHC-II) on antigen-presenting cells (APC), promoting APC activation/maturation and driving Th1 immune response. This is Lymphocyte activation gene 3 protein from Mus musculus (Mouse).